Here is a 71-residue protein sequence, read N- to C-terminus: uncharacterized protein (71 aa).

This is an uncharacterized protein from Saccharomyces cerevisiae (strain ATCC 204508 / S288c) (Baker's yeast).